The sequence spans 394 residues: Protein-glutamate methylesterase/protein-glutamine glutaminase 2 (394 aa).

The Response regulatory domain occupies 4-121; it reads KVLVVDDSSF…ARNRDEAISL (118 aa). Asp55 carries the 4-aspartylphosphate modification. The CheB-type methylesterase domain occupies 202–394; the sequence is SGKKYQLMAI…AERILVEVGR (193 aa). Catalysis depends on residues Ser214, His241, and Asp337.

The protein belongs to the CheB family. In terms of processing, phosphorylated by CheA. Phosphorylation of the N-terminal regulatory domain activates the methylesterase activity.

The protein localises to the cytoplasm. It catalyses the reaction [protein]-L-glutamate 5-O-methyl ester + H2O = L-glutamyl-[protein] + methanol + H(+). The enzyme catalyses L-glutaminyl-[protein] + H2O = L-glutamyl-[protein] + NH4(+). In terms of biological role, involved in chemotaxis. Part of a chemotaxis signal transduction system that modulates chemotaxis in response to various stimuli. Catalyzes the demethylation of specific methylglutamate residues introduced into the chemoreceptors (methyl-accepting chemotaxis proteins or MCP) by CheR. Also mediates the irreversible deamidation of specific glutamine residues to glutamic acid. This Photobacterium profundum (strain SS9) protein is Protein-glutamate methylesterase/protein-glutamine glutaminase 2.